Consider the following 71-residue polypeptide: Large ribosomal subunit protein bL31 (71 aa).

The Zn(2+) site is built by Cys16, Cys18, Cys36, and Cys39.

The protein belongs to the bacterial ribosomal protein bL31 family. Type A subfamily. Part of the 50S ribosomal subunit. The cofactor is Zn(2+).

Its function is as follows. Binds the 23S rRNA. In Thermotoga maritima (strain ATCC 43589 / DSM 3109 / JCM 10099 / NBRC 100826 / MSB8), this protein is Large ribosomal subunit protein bL31.